We begin with the raw amino-acid sequence, 124 residues long: Large ribosomal subunit protein bL12 (124 aa).

This sequence belongs to the bacterial ribosomal protein bL12 family. As to quaternary structure, homodimer. Part of the ribosomal stalk of the 50S ribosomal subunit. Forms a multimeric L10(L12)X complex, where L10 forms an elongated spine to which 2 to 4 L12 dimers bind in a sequential fashion. Binds GTP-bound translation factors.

Its function is as follows. Forms part of the ribosomal stalk which helps the ribosome interact with GTP-bound translation factors. Is thus essential for accurate translation. This chain is Large ribosomal subunit protein bL12, found in Allorhizobium ampelinum (strain ATCC BAA-846 / DSM 112012 / S4) (Agrobacterium vitis (strain S4)).